A 373-amino-acid chain; its full sequence is Chorismate synthase (373 aa).

NADP(+) is bound by residues arginine 48 and arginine 54. FMN contacts are provided by residues 131-133, 243-244, glycine 288, 303-307, and arginine 329; these read RSS, NA, and KPTSS.

Belongs to the chorismate synthase family. As to quaternary structure, homotetramer. It depends on FMNH2 as a cofactor.

The enzyme catalyses 5-O-(1-carboxyvinyl)-3-phosphoshikimate = chorismate + phosphate. The protein operates within metabolic intermediate biosynthesis; chorismate biosynthesis; chorismate from D-erythrose 4-phosphate and phosphoenolpyruvate: step 7/7. Catalyzes the anti-1,4-elimination of the C-3 phosphate and the C-6 proR hydrogen from 5-enolpyruvylshikimate-3-phosphate (EPSP) to yield chorismate, which is the branch point compound that serves as the starting substrate for the three terminal pathways of aromatic amino acid biosynthesis. This reaction introduces a second double bond into the aromatic ring system. The chain is Chorismate synthase from Beijerinckia indica subsp. indica (strain ATCC 9039 / DSM 1715 / NCIMB 8712).